The following is a 1238-amino-acid chain: Topoisomerase 1-associated factor 1 (1238 aa).

2 positions are modified to phosphoserine: serine 626 and serine 654. The segment at 1008–1051 (GIARSKKKDKRKRRKGEAKTNLPMFGDQDDERPQTVRERHGVFS) is disordered. A compositionally biased stretch (basic residues) spans 1010 to 1023 (ARSKKKDKRKRRKG). Over residues 1038–1050 (ERPQTVRERHGVF) the composition is skewed to basic and acidic residues. Phosphoserine occurs at positions 1056 and 1058. The disordered stretch occupies residues 1159–1218 (NNNNNQLSDDDVNSESRNSLGSSQPSNSQNMFQSEVYSRKESTKRSLEASAADESDEDEE). A compositionally biased stretch (polar residues) spans 1173–1194 (ESRNSLGSSQPSNSQNMFQSEV). Over residues 1195–1205 (YSRKESTKRSL) the composition is skewed to basic and acidic residues. Positions 1209 to 1218 (AADESDEDEE) are enriched in acidic residues. Serine 1213 is subject to Phosphoserine.

The protein belongs to the timeless family. Component of the fork protection complex (FPC) consisting of TOF1 and CSM3. Interacts with WSS1 and ESC4.

Its subcellular location is the nucleus. In terms of biological role, forms a fork protection complex (FPC) with CSM3 and which is required for chromosome segregation during meiosis and DNA damage repair. FPC coordinates leading and lagging strand synthesis and moves with the replication fork. FPC stabilizes replication forks in a configuration that is recognized by replication checkpoint sensors and protects stalled replication forks against the fork-releasing activity of RRM3 helicase. This is Topoisomerase 1-associated factor 1 (TOF1) from Saccharomyces cerevisiae (strain ATCC 204508 / S288c) (Baker's yeast).